A 253-amino-acid chain; its full sequence is Triosephosphate isomerase (253 aa).

9–11 (NWK) contributes to the substrate binding site. His96 functions as the Electrophile in the catalytic mechanism. The Proton acceptor role is filled by Glu168. Residues Gly174, Ser213, and 234 to 235 (GG) each bind substrate.

Belongs to the triosephosphate isomerase family. Homodimer.

It localises to the cytoplasm. The catalysed reaction is D-glyceraldehyde 3-phosphate = dihydroxyacetone phosphate. It participates in carbohydrate biosynthesis; gluconeogenesis. The protein operates within carbohydrate degradation; glycolysis; D-glyceraldehyde 3-phosphate from glycerone phosphate: step 1/1. Involved in the gluconeogenesis. Catalyzes stereospecifically the conversion of dihydroxyacetone phosphate (DHAP) to D-glyceraldehyde-3-phosphate (G3P). The protein is Triosephosphate isomerase of Hydrogenovibrio crunogenus (strain DSM 25203 / XCL-2) (Thiomicrospira crunogena).